Consider the following 238-residue polypeptide: Ribonuclease PH (238 aa).

Residues Arg-86 and 124 to 126 (GTR) each bind phosphate.

This sequence belongs to the RNase PH family. In terms of assembly, homohexameric ring arranged as a trimer of dimers.

It carries out the reaction tRNA(n+1) + phosphate = tRNA(n) + a ribonucleoside 5'-diphosphate. In terms of biological role, phosphorolytic 3'-5' exoribonuclease that plays an important role in tRNA 3'-end maturation. Removes nucleotide residues following the 3'-CCA terminus of tRNAs; can also add nucleotides to the ends of RNA molecules by using nucleoside diphosphates as substrates, but this may not be physiologically important. Probably plays a role in initiation of 16S rRNA degradation (leading to ribosome degradation) during starvation. This chain is Ribonuclease PH, found in Caulobacter vibrioides (strain ATCC 19089 / CIP 103742 / CB 15) (Caulobacter crescentus).